The primary structure comprises 475 residues: 3-keto-steroid reductase ERG27 (475 aa).

Ile32, Ile55, Thr59, and Lys65 together coordinate NADP(+). Residues Ser249 and Tyr272 each act as proton donor in the active site. The NADP(+) site is built by Tyr272, Lys276, Val324, and Ser326. Lys276 (lowers pKa of active site Tyr) is an active-site residue.

Belongs to the short-chain dehydrogenases/reductases (SDR) family. ERG27 subfamily. Heterotetramer of ERG25, ERG26, ERG27 and ERG28. ERG28 acts as a scaffold to tether ERG27 and other 4,4-demethylation-related enzymes, forming a demethylation enzyme complex, in the endoplasmic reticulum.

The protein resides in the endoplasmic reticulum membrane. Its subcellular location is the lipid droplet. It functions in the pathway steroid metabolism; ergosterol biosynthesis. In terms of biological role, 3-keto-steroid reductase; part of the third module of ergosterol biosynthesis pathway that includes the late steps of the pathway. ERG27 is a catalytic component of the C-4 demethylation complex that catalyzes the conversion of 4,4-dimethylfecosterol into fecosterol via 4-methylfecosterol. The third module or late pathway involves the ergosterol synthesis itself through consecutive reactions that mainly occur in the endoplasmic reticulum (ER) membrane. Firstly, the squalene synthase ERG9 catalyzes the condensation of 2 farnesyl pyrophosphate moieties to form squalene, which is the precursor of all steroids. Squalene synthase is crucial for balancing the incorporation of farnesyl diphosphate (FPP) into sterol and nonsterol isoprene synthesis. Secondly, squalene is converted into lanosterol by the consecutive action of the squalene epoxidase ERG1 and the lanosterol synthase ERG7. Then, the delta(24)-sterol C-methyltransferase ERG6 methylates lanosterol at C-24 to produce eburicol. Eburicol is the substrate of the sterol 14-alpha demethylase encoded by CYP51A, CYP51B and CYP51C, to yield 4,4,24-trimethyl ergosta-8,14,24(28)-trienol. CYP51B encodes the enzyme primarily responsible for sterol 14-alpha-demethylation, and plays an essential role in ascospore formation. CYP51A encodes an additional sterol 14-alpha-demethylase, induced on ergosterol depletion and responsible for the intrinsic variation in azole sensitivity. The third CYP51 isoform, CYP51C, does not encode a sterol 14-alpha-demethylase, but is required for full virulence on host wheat ears. The C-14 reductase ERG24 then reduces the C14=C15 double bond which leads to 4,4-dimethylfecosterol. A sequence of further demethylations at C-4, involving the C-4 demethylation complex containing the C-4 methylsterol oxidases ERG25, the sterol-4-alpha-carboxylate 3-dehydrogenase ERG26 and the 3-keto-steroid reductase ERG27, leads to the production of fecosterol via 4-methylfecosterol. ERG28 has a role as a scaffold to help anchor ERG25, ERG26 and ERG27 to the endoplasmic reticulum. The C-8 sterol isomerase ERG2 then catalyzes the reaction which results in unsaturation at C-7 in the B ring of sterols and thus converts fecosterol to episterol. The sterol-C5-desaturases ERG3A and ERG3BB then catalyze the introduction of a C-5 double bond in the B ring to produce 5-dehydroepisterol. The C-22 sterol desaturases ERG5A and ERG5B further convert 5-dehydroepisterol into ergosta-5,7,22,24(28)-tetraen-3beta-ol by forming the C-22(23) double bond in the sterol side chain. Finally, ergosta-5,7,22,24(28)-tetraen-3beta-ol is substrate of the C-24(28) sterol reductase ERG4 to produce ergosterol. This is 3-keto-steroid reductase ERG27 from Gibberella zeae (strain ATCC MYA-4620 / CBS 123657 / FGSC 9075 / NRRL 31084 / PH-1) (Wheat head blight fungus).